The primary structure comprises 134 residues: Replication enhancer protein (134 aa).

Belongs to the geminiviridae replication enhancer protein family. In terms of assembly, homooligomer. Interacts with the replication-associated protein (REP). Interacts with host proliferating cell nuclear antigen (PCNA). Interacts with host retinoblastoma-related protein 1 (RBR1), and may thereby deregulate the host cell cycle. Oligomerization and interaction with PCNA are necessary for optimal replication enhancement.

Its function is as follows. Increases viral DNA accumulation. Enhances infectivity and symptom expression. The chain is Replication enhancer protein from Cynanchum acutum (Little mallow).